A 91-amino-acid chain; its full sequence is Acylphosphatase (91 aa).

The Acylphosphatase-like domain maps to 5 to 91 (CSKFIVSGHV…EHDYQGFEIL (87 aa)). Asn38 is an active-site residue.

It belongs to the acylphosphatase family.

It catalyses the reaction an acyl phosphate + H2O = a carboxylate + phosphate + H(+). In Vibrio cholerae serotype O1 (strain ATCC 39541 / Classical Ogawa 395 / O395), this protein is Acylphosphatase (acyP).